The chain runs to 426 residues: Trigger factor 1 (426 aa).

The PPIase FKBP-type domain occupies glutamine 163–alanine 248.

It belongs to the FKBP-type PPIase family. Tig subfamily.

Its subcellular location is the cytoplasm. The catalysed reaction is [protein]-peptidylproline (omega=180) = [protein]-peptidylproline (omega=0). Its function is as follows. Involved in protein export. Acts as a chaperone by maintaining the newly synthesized protein in an open conformation. Functions as a peptidyl-prolyl cis-trans isomerase. In Desulfitobacterium hafniense (strain Y51), this protein is Trigger factor 1.